Consider the following 296-residue polypeptide: MECALDAQSLISLSLRKIHSSRTQRGGIKLHKNLLVSYVLRNARQLYLSERYAELYRRQPFPQPMEECGACDEPDIPELSPLQIPEEGEDEMHQLPRIQNGAELLEPLSSEEPLELPPCAHSPHPAKDPHSGFYSPAPSRGFCSSGDSGGLGLPQCSHTTVLDLDTHVVTTVESGYLHQDCPCQGAPRPALLTAPPKRKYAPAGYSYSGHGVAEEEEDVEPHFVPCKRGRYEDFCPQPLGEPTDSNNISNLISIFGSGFSGLMSRQSEAEQSLNGHLCGKQALASLGAWTRAIVAF.

The protein belongs to the IER family.

The protein is Immediate early response gene 5-like protein (ier5l) of Xenopus tropicalis (Western clawed frog).